Consider the following 60-residue polypeptide: Large ribosomal subunit protein uL30 (60 aa).

The protein belongs to the universal ribosomal protein uL30 family. Part of the 50S ribosomal subunit.

This chain is Large ribosomal subunit protein uL30, found in Clavibacter michiganensis subsp. michiganensis (strain NCPPB 382).